The sequence spans 624 residues: Polycystin-2-like protein 2 (624 aa).

The Cytoplasmic portion of the chain corresponds to 1–31; the sequence is MAEASRWHRGGASKHKLHYRKEVEITTTLQE. Residues 32 to 52 form a helical membrane-spanning segment; the sequence is LLLYFIFLINLCILTFGMVNP. Residues 53 to 276 are Extracellular-facing; that stretch reads HMYYLNKVMS…YSVKLLRYVS (224 aa). Residues asparagine 115 and asparagine 138 are each glycosylated (N-linked (GlcNAc...) asparagine). Residues 277–297 traverse the membrane as a helical segment; the sequence is YYDYFIASCEITFCIFLFVFT. At 298–314 the chain is on the cytoplasmic side; the sequence is TQEVKKIKEFKSAYFKS. The chain crosses the membrane as a helical span at residues 315–335; the sequence is IWNWLELLLLLLCFVAVSFNT. At 336–360 the chain is on the extracellular side; sequence YYNVQIFLLLGQLLKSTEKYSDFYF. Residues 361-381 form a helical membrane-spanning segment; it reads LACWHIYYNNIIAITIFFAWI. At 382–406 the chain is on the cytoplasmic side; the sequence is KIFKFISFNKTMSQLSSTLSRCVKD. Residues 407-427 traverse the membrane as a helical segment; it reads IVGFAIMFFIIFFAYAQLGFL. At 428–469 the chain is on the extracellular side; sequence VFGSQVDDFSTFQNSIFAQFRIVLGDFNFAGIQQANPILGPI. Residues 470–490 traverse the membrane as a helical segment; that stretch reads YFITFIFFVFFVLLNMFLAII. The Cytoplasmic segment spans residues 491 to 624; that stretch reads NDTYSEVKAD…NQVVRKVSAL (134 aa). The stretch at 556 to 576 forms a coiled coil; sequence ENEIQNAEQMKKWKERLEKKY.

This sequence belongs to the polycystin family. In terms of assembly, interacts with TRPC1 and TRPC5. As to expression, expressed only in testis. Expressed also in brain and kidney. In terms of tissue distribution, expressed only in transformed lymphoblasts.

The protein resides in the membrane. Functionally, exhibits a lower single conductance but no spontaneous channel activity. May function as a regulator of calcium channels or a channel component involving Ca2(+) homeostasis. The chain is Polycystin-2-like protein 2 from Homo sapiens (Human).